The following is a 278-amino-acid chain: DNA oxidative demethylase ALKBH2 (278 aa).

The interval 1-49 (MDRFLVKGAVGSLKRRMEQEQTGGGPAGLAEEEGNSKKNPRRAAPGNGV) is disordered. The short motif at 3-7 (RFLVK) is the PCNA-binding element. Residues 101-103 (FGK) and 121-123 (YTF) each bind substrate. The Fe2OG dioxygenase domain maps to 151–256 (TFNFVLINRY…RVNLTFRKIL (106 aa)). Residues Asn158, Tyr160, and His170 each contribute to the 2-oxoglutarate site. 2 residues coordinate Fe cation: His170 and Asp172. Asp173 is a binding site for substrate. Residues His235, Arg247, Thr251, and Arg253 each contribute to the 2-oxoglutarate site. His235 serves as a coordination point for Fe cation.

This sequence belongs to the alkB family. In terms of assembly, interacts with PCNA homotrimer; this interaction is enhanced during the S-phase of the cell cycle. Interacts with nucleolar proteins NCL, UBTF and NPM1. Interacts with XRCC5-XRCC6 heterodimer. Fe(2+) serves as cofactor.

It localises to the nucleus. The protein localises to the nucleolus. Its subcellular location is the nucleoplasm. It carries out the reaction a methylated nucleobase within DNA + 2-oxoglutarate + O2 = a nucleobase within DNA + formaldehyde + succinate + CO2. The enzyme catalyses an N(1)-methyl-2'-deoxyadenosine in double-stranded DNA + 2-oxoglutarate + O2 = a 2'-deoxyadenosine in double-stranded DNA + formaldehyde + succinate + CO2 + H(+). It catalyses the reaction an N(1)-methyl-2'-deoxyadenosine in single-stranded DNA + 2-oxoglutarate + O2 = a 2'-deoxyadenosine in single-stranded DNA + formaldehyde + succinate + CO2 + H(+). The catalysed reaction is an N(3)-methyl-2'-deoxycytidine in double-stranded DNA + 2-oxoglutarate + O2 = a 2'-deoxycytidine in double-stranded DNA + formaldehyde + succinate + CO2 + H(+). It carries out the reaction an N(3)-methyl-2'-deoxycytidine in single-stranded DNA + 2-oxoglutarate + O2 = a 2'-deoxycytidine in single-stranded DNA + formaldehyde + succinate + CO2 + H(+). The enzyme catalyses a 1,N(6)-etheno-2'-deoxyadenosine in double-stranded DNA + 2-oxoglutarate + O2 + H2O = a 2'-deoxyadenosine in double-stranded DNA + glyoxal + succinate + CO2. It catalyses the reaction a 1,N(6)-etheno-2'-deoxyadenosine in single-stranded DNA + 2-oxoglutarate + O2 + H2O = a 2'-deoxyadenosine in single-stranded DNA + glyoxal + succinate + CO2. The catalysed reaction is a 3,N(4)-etheno-2'-deoxycytidine in double-stranded DNA + 2-oxoglutarate + O2 + H2O = a 2'-deoxycytidine in double-stranded DNA + glyoxal + succinate + CO2. It carries out the reaction a 3,N(4)-etheno-2'-deoxycytidine in single-stranded DNA + 2-oxoglutarate + O2 + H2O = a 2'-deoxycytidine in single-stranded DNA + glyoxal + succinate + CO2. The enzyme catalyses a 1,N(2)-etheno-2'-deoxyguanosine in double-stranded DNA + 2-oxoglutarate + O2 + H2O = a 2'-deoxyguanosine in double-stranded DNA + glyoxal + succinate + CO2. Activated by ascorbate and magnesium ions. In terms of biological role, dioxygenase that repairs alkylated nucleic acid bases by direct reversal oxidative dealkylation. Can process both double-stranded (ds) and single-stranded (ss) DNA substrates, with a strong preference for dsDNA. Uses molecular oxygen, 2-oxoglutarate and iron as cofactors to oxidize the alkyl groups that are subsequently released as aldehydes, regenerating the undamaged bases. Probes the base pair stability, locates a weakened base pair and flips the damaged base to accommodate the lesion in its active site for efficient catalysis. Repairs monoalkylated bases, specifically N1-methyladenine and N3-methylcytosine, as well as higher order alkyl adducts such as bases modified with exocyclic bridged adducts known as etheno adducts including 1,N6-ethenoadenine, 3,N4-ethenocytosine and 1,N2-ethenoguanine. Acts as a gatekeeper of genomic integrity under alkylation stress. Efficiently repairs alkylated lesions in ribosomal DNA (rDNA). These lesions can cause ss- and dsDNA strand breaks that severely impair rDNA transcription. In a response mechanism to DNA damage, associates with PCNA at replication forks to repair alkylated adducts prior to replication. This Bos taurus (Bovine) protein is DNA oxidative demethylase ALKBH2 (ALKBH2).